Consider the following 222-residue polypeptide: RNA-binding protein KhpB (222 aa).

The interval 2 to 51 is jag_N domain; sequence DMVTVTAKTVEEAVTKALIELQTTSDKLTYEIVEKGSAGFLGIGSKPAII. Residues 54-133 enclose the KH domain; sequence KRKETLQDKA…KSSSDYIRVK (80 aa). Positions 138–204 constitute an R3H domain; it reads NYRERRKETL…EEPFRHVIIS (67 aa).

Belongs to the KhpB RNA-binding protein family. As to quaternary structure, forms a complex with KhpA. Homodimer or homotrimer.

The protein localises to the cytoplasm. A probable RNA chaperone. Forms a complex with KhpA which binds to cellular RNA and controls its expression. Plays a role in peptidoglycan (PG) homeostasis and cell length regulation. This is RNA-binding protein KhpB from Clostridium symbiosum (Bacteroides symbiosus).